A 695-amino-acid polypeptide reads, in one-letter code: Serotransferrin (695 aa).

The first 19 residues, 1-19 (MRLAAGALLACAALGLCLA), serve as a signal peptide directing secretion. Transferrin-like domains lie at 25–347 (VRWC…NLRE) and 361–680 (VKWC…NLRK). 2 disulfides stabilise this stretch: C28/C67 and C38/C58. R42 is subject to Dimethylated arginine. Fe(3+)-binding residues include D82 and Y114. 17 cysteine pairs are disulfide-bonded: C137–C213, C156–C350, C177–C193, C180–C196, C190–C198, C246–C260, C358–C612, C364–C396, C374–C387, C421–C690, C436–C653, C468–C539, C492–C681, C502–C516, C513–C522, C579–C593, and C631–C636. Hydrogencarbonate contacts are provided by T139, R143, A145, and G146. Y207 is a Fe(3+) binding site. Position 268 (H268) interacts with Fe(3+). At S389 the chain carries Phosphoserine. D411 and Y444 together coordinate Fe(3+). 4 residues coordinate hydrogencarbonate: T470, R474, A476, and G477. N-linked (GlcNAc...) asparagine glycosylation is present at N509. Y533 is a binding site for Fe(3+). H601 lines the Fe(3+) pocket. S682 carries the phosphoserine modification.

This sequence belongs to the transferrin family. In terms of assembly, monomer. Part of a complex composed of SLC40A1/ferroportin, TF/transferrin and HEPH/hephaestin that transfers iron from cells to transferrin. In terms of tissue distribution, expressed by the liver and secreted in plasma.

The protein localises to the secreted. Transferrins are iron binding transport proteins which can bind two Fe(3+) ions in association with the binding of an anion, usually bicarbonate. It is responsible for the transport of iron from sites of absorption and heme degradation to those of storage and utilization. Serum transferrin may also have a further role in stimulating cell proliferation. The chain is Serotransferrin (TF) from Oryctolagus cuniculus (Rabbit).